Here is a 380-residue protein sequence, read N- to C-terminus: Erythronate-4-phosphate dehydrogenase (380 aa).

Substrate-binding residues include serine 45 and threonine 66. Residues 126 to 127, aspartate 146, threonine 174, 205 to 207, and aspartate 231 each bind NAD(+); these read QV and ASR. Arginine 207 is a catalytic residue. Glutamate 236 is an active-site residue. Histidine 253 functions as the Proton donor in the catalytic mechanism. NAD(+) is bound at residue glycine 256. Position 257 (tyrosine 257) interacts with substrate.

The protein belongs to the D-isomer specific 2-hydroxyacid dehydrogenase family. PdxB subfamily. In terms of assembly, homodimer.

It localises to the cytoplasm. The catalysed reaction is 4-phospho-D-erythronate + NAD(+) = (R)-3-hydroxy-2-oxo-4-phosphooxybutanoate + NADH + H(+). The protein operates within cofactor biosynthesis; pyridoxine 5'-phosphate biosynthesis; pyridoxine 5'-phosphate from D-erythrose 4-phosphate: step 2/5. In terms of biological role, catalyzes the oxidation of erythronate-4-phosphate to 3-hydroxy-2-oxo-4-phosphonooxybutanoate. This Pseudomonas syringae pv. tomato (strain ATCC BAA-871 / DC3000) protein is Erythronate-4-phosphate dehydrogenase.